The chain runs to 439 residues: DNA 3'-5' translocase XPB2 (439 aa).

The segment at 1–54 is DRD domain; that stretch reads MVYLRYFKGLILSDAYAPGLKWSDELKAYSALAFKYRDVRKYFLEKEIEVEENV. One can recognise a Helicase ATP-binding domain in the interval 77-221; that stretch reads VKAWLKEKRG…LYPILVGPIV (145 aa). ATP-binding positions include 90–97 and arginine 127; that span reads LPTGAGKT. The short motif at 174–177 is the DEAH box element; the sequence is DEVH. The short motif at 205 to 207 is the RED motif element; it reads RDD. A flexible hinge region region spans residues 227-234; that stretch reads EELAGKYI. The segment at 248–307 is thM region; the sequence is NEEKKRYDGLRKKLKDFLSSRGLKLQNLDDFHRLVKLAAKDKEAREALLAWHESLNIAVN. The Helicase C-terminal domain maps to 311–439; that stretch reads KIEKLREILQ…DYRLSRRRRE (129 aa).

The protein belongs to the helicase family. RAD25/XPB subfamily. In terms of assembly, forms a heterodimer with Bax1.

It catalyses the reaction Couples ATP hydrolysis with the unwinding of duplex DNA by translocating in the 3'-5' direction.. It carries out the reaction ATP + H2O = ADP + phosphate + H(+). In terms of biological role, ATP-dependent DNA translocase which moves along double-stranded DNA (dsDNA) in a 3'-5' direction, unwinding the DNA. The ThM domain grips the resulting 3'-ssDNA tail and functions as a wedge (particularly Phe-278), breaking dsDNA base pairs, probably using the energy from ATP hydrolysis to move along dsDNA. A DNA-dependent ATPase; double-stranded DNA (dsDNA) stimulates the activity more than single-stranded DNA (ssDNA), while Bax1 stimulates ATPase more. In an in vitro assay had no detectable helicase activity. Binds ssDNA better than dsDNA. Has very low ATPase activity that is stimulated by Bax1; dsDNA, Y-form DNA and a DNA substrate with a 6 base pair (bp) bubble in the center stimulate the XPB2-Bax1 ATPase activity about 10- 20-fold more than the absence of DNA. In an XPB2-Bax1-bubble DNA crystal (12 bp of dsDNA, a 6 base bubble and 6 bp of dsDNA) the short 6 bp arm is unwound. The 2 helicase and the ThM domains of XPB2 with the NTD and CRD domains of Bax1 encircle the DNA, forming a tunnel where the 12 bp dsDNA and the ds-ssDNA junction are located. The ThM domain is wedged between the ssDNA tails, with the 5' ssDNA contacting Bax1 and the 3' ssDNA in a channel in XPB2. Bax1 increases the affinity of XPB2 for forked DNA. This chain is DNA 3'-5' translocase XPB2, found in Sulfurisphaera tokodaii (strain DSM 16993 / JCM 10545 / NBRC 100140 / 7) (Sulfolobus tokodaii).